The sequence spans 67 residues: Large ribosomal subunit protein bL35 (67 aa).

The tract at residues 22–52 (VLAGPGKKRHNLSARSQKAKRQNRGSQVLTH) is disordered. Positions 27–44 (GKKRHNLSARSQKAKRQN) are enriched in basic residues.

The protein belongs to the bacterial ribosomal protein bL35 family.

This chain is Large ribosomal subunit protein bL35, found in Granulibacter bethesdensis (strain ATCC BAA-1260 / CGDNIH1).